A 478-amino-acid chain; its full sequence is Subtilisin-like protease 3 (478 aa).

An N-terminal signal peptide occupies residues 1–17 (MKFSTILPILWANCCLC). One can recognise an Inhibitor I9 domain in the interval 70-167 (RYVIVFNEDI…FVEQETTVKI (98 aa)). The Peptidase S8 domain occupies 177 to 478 (PWGLHRVSHR…GGGKKLDGFW (302 aa)). Residues aspartate 213, histidine 245, and serine 407 each act as charge relay system in the active site.

This sequence belongs to the peptidase S8 family.

Serine protease with unknown substrate. This Saccharomyces cerevisiae (strain ATCC 204508 / S288c) (Baker's yeast) protein is Subtilisin-like protease 3 (YSP3).